The following is a 695-amino-acid chain: DNA ligase (695 aa).

Residues 44-48 (DAEYD), 93-94 (SL), and Glu-124 each bind NAD(+). The active-site N6-AMP-lysine intermediate is the Lys-126. The NAD(+) site is built by Arg-147, Glu-187, Lys-304, and Lys-328. Residues Cys-422, Cys-425, Cys-440, and Cys-445 each contribute to the Zn(2+) site. Residues 606–695 (TVQGPLAGKT…GIEVEAAARS (90 aa)) form the BRCT domain.

It belongs to the NAD-dependent DNA ligase family. LigA subfamily. Mg(2+) serves as cofactor. Requires Mn(2+) as cofactor.

It catalyses the reaction NAD(+) + (deoxyribonucleotide)n-3'-hydroxyl + 5'-phospho-(deoxyribonucleotide)m = (deoxyribonucleotide)n+m + AMP + beta-nicotinamide D-nucleotide.. Its function is as follows. DNA ligase that catalyzes the formation of phosphodiester linkages between 5'-phosphoryl and 3'-hydroxyl groups in double-stranded DNA using NAD as a coenzyme and as the energy source for the reaction. It is essential for DNA replication and repair of damaged DNA. The protein is DNA ligase of Thermomicrobium roseum (strain ATCC 27502 / DSM 5159 / P-2).